We begin with the raw amino-acid sequence, 197 residues long: Phosphoheptose isomerase (197 aa).

In terms of domain architecture, SIS spans 34–196 (MVQCLLGGNK…DRTLFPQDEQ (163 aa)). 49-51 (NGG) contacts substrate. His58 and Glu62 together coordinate Zn(2+). Residues Glu62, 91-92 (ND), 117-119 (STS), Ser122, and Gln172 contribute to the substrate site. Gln172 and His180 together coordinate Zn(2+).

The protein belongs to the SIS family. GmhA subfamily. As to quaternary structure, homotetramer. Zn(2+) serves as cofactor.

Its subcellular location is the cytoplasm. It catalyses the reaction 2 D-sedoheptulose 7-phosphate = D-glycero-alpha-D-manno-heptose 7-phosphate + D-glycero-beta-D-manno-heptose 7-phosphate. It participates in carbohydrate biosynthesis; D-glycero-D-manno-heptose 7-phosphate biosynthesis; D-glycero-alpha-D-manno-heptose 7-phosphate and D-glycero-beta-D-manno-heptose 7-phosphate from sedoheptulose 7-phosphate: step 1/1. Functionally, catalyzes the isomerization of sedoheptulose 7-phosphate in D-glycero-D-manno-heptose 7-phosphate. The sequence is that of Phosphoheptose isomerase from Shewanella piezotolerans (strain WP3 / JCM 13877).